The sequence spans 432 residues: Adenylosuccinate synthetase (432 aa).

GTP contacts are provided by residues 13–19 and 41–43; these read GDEGKGK and GHT. Asp-14 acts as the Proton acceptor in catalysis. Mg(2+) is bound by residues Asp-14 and Gly-41. Residues 14-17, 39-42, Thr-130, Arg-144, Gln-225, Thr-240, and Arg-304 each bind IMP; these read DEGK and NAGH. Catalysis depends on His-42, which acts as the Proton donor. 300 to 306 contacts substrate; it reads ATTGRSR. GTP is bound by residues Arg-306, 332–334, and 415–417; these read KLD and STG.

Belongs to the adenylosuccinate synthetase family. In terms of assembly, homodimer. It depends on Mg(2+) as a cofactor.

The protein resides in the cytoplasm. It carries out the reaction IMP + L-aspartate + GTP = N(6)-(1,2-dicarboxyethyl)-AMP + GDP + phosphate + 2 H(+). The protein operates within purine metabolism; AMP biosynthesis via de novo pathway; AMP from IMP: step 1/2. In terms of biological role, plays an important role in the de novo pathway of purine nucleotide biosynthesis. Catalyzes the first committed step in the biosynthesis of AMP from IMP. This chain is Adenylosuccinate synthetase, found in Yersinia pestis bv. Antiqua (strain Antiqua).